The chain runs to 340 residues: Ketol-acid reductoisomerase (NADP(+)) (340 aa).

Positions 3–183 constitute a KARI N-terminal Rossmann domain; sequence VNIYYDKDCD…GGGRTGIIET (181 aa). NADP(+)-binding positions include 26 to 29, serine 54, and 84 to 87; these read FGSQ and DELQ. The active site involves histidine 109. Glycine 135 is a binding site for NADP(+). A KARI C-terminal knotted domain is found at 184–329; sequence TFKDETETDL…KKLRAMMPWI (146 aa). Mg(2+) contacts are provided by aspartate 192, glutamate 196, glutamate 228, and glutamate 232. Residue serine 253 coordinates substrate.

The protein belongs to the ketol-acid reductoisomerase family. Requires Mg(2+) as cofactor.

The catalysed reaction is (2R)-2,3-dihydroxy-3-methylbutanoate + NADP(+) = (2S)-2-acetolactate + NADPH + H(+). It catalyses the reaction (2R,3R)-2,3-dihydroxy-3-methylpentanoate + NADP(+) = (S)-2-ethyl-2-hydroxy-3-oxobutanoate + NADPH + H(+). Its pathway is amino-acid biosynthesis; L-isoleucine biosynthesis; L-isoleucine from 2-oxobutanoate: step 2/4. It functions in the pathway amino-acid biosynthesis; L-valine biosynthesis; L-valine from pyruvate: step 2/4. Its function is as follows. Involved in the biosynthesis of branched-chain amino acids (BCAA). Catalyzes an alkyl-migration followed by a ketol-acid reduction of (S)-2-acetolactate (S2AL) to yield (R)-2,3-dihydroxy-isovalerate. In the isomerase reaction, S2AL is rearranged via a Mg-dependent methyl migration to produce 3-hydroxy-3-methyl-2-ketobutyrate (HMKB). In the reductase reaction, this 2-ketoacid undergoes a metal-dependent reduction by NADPH to yield (R)-2,3-dihydroxy-isovalerate. This is Ketol-acid reductoisomerase (NADP(+)) from Campylobacter curvus (strain 525.92).